The primary structure comprises 148 residues: IQ domain-containing protein F5 (148 aa).

IQ domains follow at residues 11–40 (ERSAAVFIQAWWRGMLVRRTLLHAALRAWI) and 67–96 (QEWAAVRLQSWVRMWCVRQRYCRLLNAVRI).

The sequence is that of IQ domain-containing protein F5 (IQCF5) from Homo sapiens (Human).